Consider the following 54-residue polypeptide: Glutathione S-transferase 6.7 (54 aa).

This sequence belongs to the GST superfamily. Theta family. Homodimer. Post-translationally, the N-terminus is blocked.

It is found in the cytoplasm. The enzyme catalyses RX + glutathione = an S-substituted glutathione + a halide anion + H(+). Conjugation of reduced glutathione to a wide number of exogenous and endogenous hydrophobic electrophiles. The chain is Glutathione S-transferase 6.7 from Dicentrarchus labrax (European seabass).